Consider the following 355-residue polypeptide: uncharacterized protein (355 aa).

Belongs to the serpin family. Poxviruses subfamily.

This is an uncharacterized protein from Vertebrata (FPV).